A 182-amino-acid chain; its full sequence is ATP-dependent protease subunit HslV (182 aa).

Threonine 12 is an active-site residue. Residues alanine 167, cysteine 170, and threonine 173 each coordinate Na(+).

Belongs to the peptidase T1B family. HslV subfamily. In terms of assembly, a double ring-shaped homohexamer of HslV is capped on each side by a ring-shaped HslU homohexamer. The assembly of the HslU/HslV complex is dependent on binding of ATP.

The protein resides in the cytoplasm. It catalyses the reaction ATP-dependent cleavage of peptide bonds with broad specificity.. With respect to regulation, allosterically activated by HslU binding. Functionally, protease subunit of a proteasome-like degradation complex believed to be a general protein degrading machinery. The sequence is that of ATP-dependent protease subunit HslV from Chlorobium phaeobacteroides (strain BS1).